The chain runs to 82 residues: U-scoloptoxin(21)-Sm3a (82 aa).

A signal peptide spans Met-1–Glu-21.

This sequence belongs to the scoloptoxin-21 family. As to expression, expressed by the venom gland.

It localises to the secreted. The polypeptide is U-scoloptoxin(21)-Sm3a (Scolopendra morsitans (Tanzanian blue ringleg centipede)).